Here is a 350-residue protein sequence, read N- to C-terminus: MSASPTAGQAGLSYRDAGVDIDAGDALVDRIKPFAKRTMREGVMAGIGGFGALFELSKKYQEPVLVSGTDGVGTKLKLAFQLNRHDTVGQDLVAMSVNDILVQGAEPLFFLDYFACGKLDVDTAATVIQGIARGCELAGCALIGGETAEMPSMYPDGEYDLAGFAVGAVEKKKIIDGSTITPGDVVLGLASSGAHSNGYSLVRKIIEVAKPDLDADFHGQRLQDAIMAPTRIYVKPLLSLIETLPVKGMAHITGGGLTENVPRVLAQDVTAVLHRDAWTLPPLFQWLQAQGRVADDEMHRVFNCGIGMVVIVAKEDAERAIRHLQAAGEAVWQIGEIRERAEGEAQTIVI.

It belongs to the AIR synthase family.

Its subcellular location is the cytoplasm. The catalysed reaction is 2-formamido-N(1)-(5-O-phospho-beta-D-ribosyl)acetamidine + ATP = 5-amino-1-(5-phospho-beta-D-ribosyl)imidazole + ADP + phosphate + H(+). The protein operates within purine metabolism; IMP biosynthesis via de novo pathway; 5-amino-1-(5-phospho-D-ribosyl)imidazole from N(2)-formyl-N(1)-(5-phospho-D-ribosyl)glycinamide: step 2/2. The sequence is that of Phosphoribosylformylglycinamidine cyclo-ligase from Cupriavidus taiwanensis (strain DSM 17343 / BCRC 17206 / CCUG 44338 / CIP 107171 / LMG 19424 / R1) (Ralstonia taiwanensis (strain LMG 19424)).